Consider the following 461-residue polypeptide: Nuclear distribution protein PAC1 (461 aa).

The LisH domain maps to 9–41 (QAEELHKSIIAYLTANNLLNTANTLRAELNLSE). WD repeat units follow at residues 114 to 155 (SHRD…RTIK), 157 to 197 (HTRA…KNIR), 201 to 248 (GHDH…CVRT), 251 to 290 (GHTAWVRDVYPSPDGRFLLSTGDDSTARLWDISVSNPESK), 312 to 355 (QYLS…LMTL), 357 to 396 (GHDNWIRALAFHPGGKYLFSVSDDRTLRCWDLSQEGKCIK), and 401 to 457 (AHER…MKLR).

The protein belongs to the WD repeat LIS1/nudF family. In terms of assembly, self-associates. Interacts with NDL1 and dynein.

It is found in the cytoplasm. It localises to the cytoskeleton. The protein localises to the spindle pole. In terms of biological role, positively regulates the activity of the minus-end directed microtubule motor protein dynein. May enhance dynein-mediated microtubule sliding by targeting dynein to the microtubule plus end. Required for nuclear migration during vegetative growth as well as development. Required for retrograde early endosome (EE) transport from the hyphal tip. Required for localization of dynein to the mitotic spindle poles. Recruits additional proteins to the dynein complex at SPBs. This Arthroderma otae (strain ATCC MYA-4605 / CBS 113480) (Microsporum canis) protein is Nuclear distribution protein PAC1.